We begin with the raw amino-acid sequence, 209 residues long: Mitochondrial import inner membrane translocase subunit Tim23 (209 aa).

Helical transmembrane passes span 73–93 (FELA…FGAV), 125–145 (ALWA…GVII), and 180–200 (GGLA…WEHI).

It belongs to the Tim17/Tim22/Tim23 family. In terms of assembly, component of the TIM23 complex at least composed of timm23, timm17 and timm50. The complex interacts with the timm44 component of the PAM complex.

It localises to the mitochondrion inner membrane. Functionally, essential component of the TIM23 complex, a complex that mediates the translocation of transit peptide-containing proteins across the mitochondrial inner membrane. This chain is Mitochondrial import inner membrane translocase subunit Tim23 (timm23), found in Xenopus tropicalis (Western clawed frog).